A 1659-amino-acid polypeptide reads, in one-letter code: Cortactin-binding protein 2 (1659 aa).

The segment at 1–23 (MATDGASCEPDLSRAPEDAAGAA) is disordered. Residues 119–276 (RKMQERMSAQ…EQLKRGSDSK (158 aa)) are a coiled coil. Disordered regions lie at residues 324 to 436 (LTMP…LHPG) and 450 to 474 (GNAN…SPTS). Low complexity-rich tracts occupy residues 337-348 (ASANAKGSAAMA) and 381-392 (GPSTGLTPDPTS). Polar residues predominate over residues 405 to 418 (TAQTPGITPQNSQA). The residue at position 494 (Arg-494) is an Asymmetric dimethylarginine. Residues 495-612 (FTGPQAGAPP…SSPQLPPKPS (118 aa)) form a disordered region. A compositionally biased stretch (polar residues) spans 579–589 (TVASPPSSLPQ). 5 ANK repeats span residues 705-735 (GRPT…DINY), 739-768 (DGHS…QVNA), 772-801 (NGFT…NINH), 805-834 (GGQT…DRNV), and 838-867 (DGWT…PAHG). Residues 869 to 893 (SFSEEESESGVFDLDGGGESPEGKS) are disordered. The stretch at 908 to 938 (EGWTAAHIAASKGFKNCLEILCRHGGLETER) is one ANK 6 repeat. A disordered region spans residues 1443 to 1478 (KKKGESGAWRKVNTSPRRKSGRFSLPTWNKPDLSTE). Ser-1520 is subject to Phosphoserine. Residues 1613 to 1659 (RSKVTQCSQNTKRNSSSSNTRQIEINNNSKEENWNLHKNEHLEKPNK) form a disordered region. Residues 1620–1634 (SQNTKRNSSSSNTRQ) are compositionally biased toward low complexity. Over residues 1641–1659 (SKEENWNLHKNEHLEKPNK) the composition is skewed to basic and acidic residues.

Interacts with CTTN/cortactin SH3 domain. Interacts with STRN, STRN4/zinedin and MOB4/phocein; this interactions mediate the association with the STRIPAK core complex and may regulate dendritic spine distribution of the STRIPAK complex in hippocampal neurons. Activation of glutamate receptors weakens the interaction with STRN and STRN4.

It localises to the cytoplasm. It is found in the cell cortex. The protein localises to the cell projection. The protein resides in the dendritic spine. Functionally, regulates the dendritic spine distribution of CTTN/cortactin in hippocampal neurons, and thus controls dendritic spinogenesis and dendritic spine maintenance. Associates with the striatin-interacting phosphatase and kinase (STRIPAK) core complex to regulate dendritic spine distribution of the STRIPAK complex in hippocampal neurons. In Saimiri boliviensis boliviensis (Bolivian squirrel monkey), this protein is Cortactin-binding protein 2 (CTTNBP2).